Consider the following 170-residue polypeptide: tRNA-splicing endonuclease (170 aa).

Catalysis depends on residues Tyr110, His116, and Lys147.

The protein belongs to the tRNA-intron endonuclease family. Archaeal short subfamily. As to quaternary structure, homotetramer; although the tetramer contains four active sites, only two participate in the cleavage. Therefore, it should be considered as a dimer of dimers.

It catalyses the reaction pretRNA = a 3'-half-tRNA molecule with a 5'-OH end + a 5'-half-tRNA molecule with a 2',3'-cyclic phosphate end + an intron with a 2',3'-cyclic phosphate and a 5'-hydroxyl terminus.. In terms of biological role, endonuclease that removes tRNA introns. Cleaves pre-tRNA at the 5'- and 3'-splice sites to release the intron. The products are an intron and two tRNA half-molecules bearing 2',3' cyclic phosphate and 5'-OH termini. Recognizes a pseudosymmetric substrate in which 2 bulged loops of 3 bases are separated by a stem of 4 bp. In Pyrococcus furiosus (strain ATCC 43587 / DSM 3638 / JCM 8422 / Vc1), this protein is tRNA-splicing endonuclease.